Consider the following 504-residue polypeptide: Sodium-coupled neutral amino acid transporter 3 (504 aa).

Ser52 carries the post-translational modification Phosphoserine; by PKC. N-linked (GlcNAc...) asparagine glycosylation is present at Asn73. Transmembrane regions (helical) follow at residues 82-102, 105-125, 143-163, 186-206, and 212-232; these read GILGLAYAMANTGIILFLFLL, VALLSSYSIHLLLKSSGIVGI, AAALAITLQNIGAMSSYLYII, MDGNYLVILVSVIIILPLALM, and LGYSSGFSLSCMVFFLIAVIY. Cys239 and Cys275 are disulfide-bonded. Residues Asn247 and Asn251 are each glycosylated (N-linked (GlcNAc...) asparagine). The chain crosses the membrane as a helical span at residues 287-307; the sequence is AYTIPIMAFAFVCHPEVLPIY. Residue Asn323 is glycosylated (N-linked (GlcNAc...) asparagine). A run of 5 helical transmembrane segments spans residues 324-344, 366-386, 408-428, 431-451, and 469-489; these read LSIAVMYVMYFLAALFGYLTF, ILCVRVAVLIAVTLTVPIVLF, VLIATGLLTCINLLVIFAPNI, IFGIIGATSAPCLIFIFPAIF, and ILALCFAAVGFLLMTMSLSFI.

This sequence belongs to the amino acid/polyamine transporter 2 family. Post-translationally, phosphorylation at Ser-52 induces internalization and sequestration into an intracellular reservoir. During dephosphorylation by protein phosphatases, can recycle back to the plasma membrane and regain activity. Prolonged phosphorylation results in its degradation. In terms of tissue distribution, highly expressed in liver. Expressed in skeletal muscle. Expressed in kidney, heart and brain. Not detected in gut, lung or spleen. Expressed ubiquitously in hepatocytes in liver whereas in kidney expression is restricted to the medulla. Within brain, expressed in glial cells. In the cerebellum, expressed on Bergmann glial fibers in the molecular layer and astrocytes in the granule layer. Expressed in brain kidney and liver (at protein level). In the adult kidney, highly expressed in the outer strip of the outer medulla and medullary rays penetrating into the kidney cortex (at protein level).

Its subcellular location is the cell membrane. It localises to the basolateral cell membrane. It catalyses the reaction L-glutamine(out) + Na(+)(out) + H(+)(in) = L-glutamine(in) + Na(+)(in) + H(+)(out). The enzyme catalyses L-asparagine(out) + Na(+)(out) + H(+)(in) = L-asparagine(in) + Na(+)(in) + H(+)(out). It carries out the reaction L-histidine(out) + Na(+)(out) + H(+)(in) = L-histidine(in) + Na(+)(in) + H(+)(out). With respect to regulation, L-glutamine efflux and L-glutamine uptake are regulated by CO2/HCO3(-) through SLC4A4 leading to modulation of cytosolic pH and Na(+)concentration. Symporter that cotransports specific neutral amino acids and sodium ions, coupled to an H(+) antiporter activity. Mainly participates in the glutamate-GABA-glutamine cycle in brain where it transports L-glutamine from astrocytes in the intercellular space for the replenishment of both neurotransmitters glutamate and gamma-aminobutyric acid (GABA) in neurons. Also functions as the major influx transporter in ganglion cells mediating the uptake of glutamine. The transport activity is specific for L-glutamine, L-histidine and L-asparagine. The transport is electroneutral coupled to the cotransport of 1 Na(+) and the antiport of 1 H(+), pH dependent, saturable, Li(+) tolerant and functions in both direction depending on the concentration gradients of its substrates and cotransported ions. Also mediates an amino acid-gated H(+) conductance that is not stoichiometrically coupled to the amino acid transport but which influences the ionic gradients that drive the amino acid transport. In addition, may play a role in nitrogen metabolism, amino acid homeostasis, glucose metabolism and renal ammoniagenesis. The protein is Sodium-coupled neutral amino acid transporter 3 of Rattus norvegicus (Rat).